Reading from the N-terminus, the 141-residue chain is Transcriptional regulator MraZ (141 aa).

SpoVT-AbrB domains follow at residues 5–47 (TFNL…KPAD) and 76–119 (ANLV…DKVQ).

This sequence belongs to the MraZ family. Forms oligomers.

The protein localises to the cytoplasm. Its subcellular location is the nucleoid. The chain is Transcriptional regulator MraZ from Mycoplasma genitalium (strain ATCC 33530 / DSM 19775 / NCTC 10195 / G37) (Mycoplasmoides genitalium).